A 353-amino-acid chain; its full sequence is Major outer membrane protein (353 aa).

The signal sequence occupies residues M1–A20.

As to quaternary structure, disulfide bond interactions within and between MOMP molecules and other components form high molecular-weight oligomers.

The protein localises to the cell outer membrane. In terms of biological role, structural rigidity of the outer membrane of elementary bodies and porin forming, permitting diffusion of solutes through the intracellular reticulate body membrane. This is Major outer membrane protein (ompH) from Pasteurella multocida.